The primary structure comprises 223 residues: Small ribosomal subunit protein uS3 (223 aa).

A KH type-2 domain is found at 39–108 (IRKFVKKKGA…VILINIVEVK (70 aa)).

Belongs to the universal ribosomal protein uS3 family. In terms of assembly, part of the 30S ribosomal subunit. Forms a tight complex with proteins S10 and S14.

Binds the lower part of the 30S subunit head. Binds mRNA in the 70S ribosome, positioning it for translation. In Clostridium kluyveri (strain NBRC 12016), this protein is Small ribosomal subunit protein uS3.